The following is a 183-amino-acid chain: Chromophore lyase CpcT/CpeT 4 (183 aa).

This sequence belongs to the CpcT/CpeT biliprotein lyase family.

Functionally, covalently attaches a chromophore to Cys residue(s) of phycobiliproteins. This is Chromophore lyase CpcT/CpeT 4 from Gloeobacter violaceus (strain ATCC 29082 / PCC 7421).